Here is a 98-residue protein sequence, read N- to C-terminus: Large ribosomal subunit protein uL23 (98 aa).

It belongs to the universal ribosomal protein uL23 family. As to quaternary structure, part of the 50S ribosomal subunit. Contacts protein L29, and trigger factor when it is bound to the ribosome.

In terms of biological role, one of the early assembly proteins it binds 23S rRNA. One of the proteins that surrounds the polypeptide exit tunnel on the outside of the ribosome. Forms the main docking site for trigger factor binding to the ribosome. The protein is Large ribosomal subunit protein uL23 of Cellvibrio japonicus (strain Ueda107) (Pseudomonas fluorescens subsp. cellulosa).